The chain runs to 115 residues: NADH-ubiquinone oxidoreductase chain 3 (115 aa).

3 consecutive transmembrane segments (helical) span residues 4-24, 55-75, and 86-106; these read MLILLMNIALAAILISLAFWL, FFLVAITFLLFDLEIALLLPL, and MLMTMAFILITILALGLAYEW.

This sequence belongs to the complex I subunit 3 family. Core subunit of respiratory chain NADH dehydrogenase (Complex I) which is composed of 45 different subunits. Interacts with TMEM186. Interacts with TMEM242.

The protein resides in the mitochondrion inner membrane. It catalyses the reaction a ubiquinone + NADH + 5 H(+)(in) = a ubiquinol + NAD(+) + 4 H(+)(out). Core subunit of the mitochondrial membrane respiratory chain NADH dehydrogenase (Complex I) which catalyzes electron transfer from NADH through the respiratory chain, using ubiquinone as an electron acceptor. Essential for the catalytic activity of complex I. In Microtus pennsylvanicus (Meadow vole), this protein is NADH-ubiquinone oxidoreductase chain 3.